We begin with the raw amino-acid sequence, 694 residues long: Nuclear factor erythroid 2-related factor 3 (694 aa).

Over residues 133 to 150 (ASSTGGAGASVDGGSQAV) the composition is skewed to low complexity. Disordered stretches follow at residues 133-256 (ASST…LNGT) and 330-357 (DPTA…QTLP). Basic and acidic residues-rich tracts occupy residues 193 to 217 (GVLR…RVSA) and 231 to 254 (NKIA…RHLN). Over residues 333–357 (ARTSQSQEPFLQLNSHTTNPEQTLP) the composition is skewed to polar residues. Residues 578–641 (LIRDIRRRGK…NIMKQKLHDL (64 aa)) enclose the bZIP domain. The segment at 580-599 (RDIRRRGKNKVAAQNCRKRK) is basic motif. The tract at residues 606–620 (LEDDVCNLQAKKETL) is leucine-zipper.

This sequence belongs to the bZIP family. CNC subfamily. Heterodimer with MAFG, MAFK and other small MAF proteins that binds to the MAF recognition elements (MARE). As to expression, highly expressed in human placenta and also in B-cell and monocyte cell lines. Low expression in heart, brain, lung, skeletal muscle, kidney and pancreas.

Its subcellular location is the nucleus. Functionally, activates erythroid-specific, globin gene expression. The sequence is that of Nuclear factor erythroid 2-related factor 3 (NFE2L3) from Homo sapiens (Human).